The chain runs to 945 residues: Isoleucine--tRNA ligase (945 aa).

Basic and acidic residues predominate over residues 1–10; it reads MSNKKADSKP. The interval 1 to 21 is disordered; that stretch reads MSNKKADSKPQAKYPVNLLDT. The 'HIGH' region signature appears at 66–76; sequence PYANGDIHLGH. Position 581 (Glu-581) interacts with L-isoleucyl-5'-AMP. The 'KMSKS' region motif lies at 622 to 626; it reads KMSKS. Lys-625 provides a ligand contact to ATP. Zn(2+)-binding residues include Cys-908, Cys-911, Cys-928, and Cys-931.

It belongs to the class-I aminoacyl-tRNA synthetase family. IleS type 1 subfamily. Monomer. It depends on Zn(2+) as a cofactor.

It is found in the cytoplasm. The catalysed reaction is tRNA(Ile) + L-isoleucine + ATP = L-isoleucyl-tRNA(Ile) + AMP + diphosphate. Functionally, catalyzes the attachment of isoleucine to tRNA(Ile). As IleRS can inadvertently accommodate and process structurally similar amino acids such as valine, to avoid such errors it has two additional distinct tRNA(Ile)-dependent editing activities. One activity is designated as 'pretransfer' editing and involves the hydrolysis of activated Val-AMP. The other activity is designated 'posttransfer' editing and involves deacylation of mischarged Val-tRNA(Ile). This Burkholderia multivorans (strain ATCC 17616 / 249) protein is Isoleucine--tRNA ligase.